Reading from the N-terminus, the 248-residue chain is Ribosomal RNA small subunit methyltransferase J (248 aa).

Residues 98 to 99 (RD), 114 to 115 (ER), 150 to 151 (SS), and aspartate 168 each bind S-adenosyl-L-methionine.

This sequence belongs to the methyltransferase superfamily. RsmJ family.

It is found in the cytoplasm. The catalysed reaction is guanosine(1516) in 16S rRNA + S-adenosyl-L-methionine = N(2)-methylguanosine(1516) in 16S rRNA + S-adenosyl-L-homocysteine + H(+). Functionally, specifically methylates the guanosine in position 1516 of 16S rRNA. This is Ribosomal RNA small subunit methyltransferase J from Shewanella amazonensis (strain ATCC BAA-1098 / SB2B).